Consider the following 292-residue polypeptide: Ribosomal RNA small subunit methyltransferase I (292 aa).

The protein belongs to the methyltransferase superfamily. RsmI family.

Its subcellular location is the cytoplasm. It catalyses the reaction cytidine(1402) in 16S rRNA + S-adenosyl-L-methionine = 2'-O-methylcytidine(1402) in 16S rRNA + S-adenosyl-L-homocysteine + H(+). In terms of biological role, catalyzes the 2'-O-methylation of the ribose of cytidine 1402 (C1402) in 16S rRNA. The protein is Ribosomal RNA small subunit methyltransferase I of Buchnera aphidicola subsp. Baizongia pistaciae (strain Bp).